We begin with the raw amino-acid sequence, 322 residues long: Transaldolase (322 aa).

Lys136 (schiff-base intermediate with substrate) is an active-site residue.

This sequence belongs to the transaldolase family. Type 1 subfamily. Homodimer.

Its subcellular location is the cytoplasm. The enzyme catalyses D-sedoheptulose 7-phosphate + D-glyceraldehyde 3-phosphate = D-erythrose 4-phosphate + beta-D-fructose 6-phosphate. The protein operates within carbohydrate degradation; pentose phosphate pathway; D-glyceraldehyde 3-phosphate and beta-D-fructose 6-phosphate from D-ribose 5-phosphate and D-xylulose 5-phosphate (non-oxidative stage): step 2/3. Functionally, transaldolase is important for the balance of metabolites in the pentose-phosphate pathway. The sequence is that of Transaldolase from Xanthomonas euvesicatoria pv. vesicatoria (strain 85-10) (Xanthomonas campestris pv. vesicatoria).